The chain runs to 377 residues: UPF0754 membrane protein lin2327 (377 aa).

Transmembrane regions (helical) follow at residues 1–21 (MSVLFTILLMAVIGGFIGAMT) and 357–377 (YLGGILGGFIGIIQGILAMWI).

The protein belongs to the UPF0754 family.

The protein localises to the cell membrane. This is UPF0754 membrane protein lin2327 from Listeria innocua serovar 6a (strain ATCC BAA-680 / CLIP 11262).